A 106-amino-acid polypeptide reads, in one-letter code: Nucleoid-associated protein Rpal_0620 (106 aa).

This sequence belongs to the YbaB/EbfC family. In terms of assembly, homodimer.

It localises to the cytoplasm. The protein localises to the nucleoid. Binds to DNA and alters its conformation. May be involved in regulation of gene expression, nucleoid organization and DNA protection. The protein is Nucleoid-associated protein Rpal_0620 of Rhodopseudomonas palustris (strain TIE-1).